A 660-amino-acid chain; its full sequence is MEVTRQNFKEVLPEVCNAVQEADFISIDGEFTGISDGPSVSALTNGLDTPEERYTKLRKHSMNFLLFQFGVCTFRYDQNQSTYITKAFNFYIFPKPFSRTSPDIKFICQSSSIDFLASQGFDFNKVFRSGIPYLNQEEECQLREQYEERRGQMNGAGPVSYTPPSGTGVCNVPEDQREFIRSVEEKVEALLKNTDQTLDLEPCTGFQRKLIYQTLNSKYSKGLHVEALETEKKERFIQISKVDDEERRRREQQKQQREQEELNDAVGFSRVIRAISKSGKLVVGHNMLLDVMHTIHQFCGPLPEELDDFKEVAMTVFPRLLDTKLMASTQPFKEIIHNTSLAELHKQLRQKPFRPPTTECPEGLQSYDTSTEQLHEAGYDAFITGLCFISMANYLGSFLTPPKSHISARSKLLEPFYNKLFLMRVIDIPYLNMSGPDLQPKRDHVLYVTFPKEWKTSDLYQLFSAFGNIQVSWVDDTSAFVSLSQTEQVQIAMNTSRYAESYRIQTYAEYLQSRQKNTHSSRKWASDGWADTSYPSVAMTTASGYSHTDNWHQAVKRSISPSLDEQNHGADSSWTNYSVKKIKTEGSCTQTYADVAGSCDWPRLQADEGGASVSPVAEEAELDEFSANQSQGKRSRKHKKRKSDASETTPPALFDVPQVW.

A divalent metal cation-binding residues include aspartate 28 and glutamate 30. The region spanning 177-243 (REFIRSVEEK…ERFIQISKVD (67 aa)) is the R3H domain. Residues aspartate 290 and aspartate 380 each coordinate a divalent metal cation. Phosphoserine occurs at positions 560 and 614. The disordered stretch occupies residues 606–660 (ADEGGASVSPVAEEAELDEFSANQSQGKRSRKHKKRKSDASETTPPALFDVPQVW). The span at 633-642 (KRSRKHKKRK) shows a compositional bias: basic residues. A Phosphoserine modification is found at serine 643. Threonine 649 carries the phosphothreonine modification.

Belongs to the CAF1 family. It depends on a divalent metal cation as a cofactor.

The protein resides in the cytoplasm. It localises to the nucleus. It catalyses the reaction Exonucleolytic cleavage of poly(A) to 5'-AMP.. Its function is as follows. 3'-exoribonuclease that has a preference for poly(A) tails of mRNAs, thereby efficiently degrading poly(A) tails. Exonucleolytic degradation of the poly(A) tail is often the first step in the decay of eukaryotic mRNAs and is also used to silence certain maternal mRNAs translationally during oocyte maturation and early embryonic development. The polypeptide is Poly(A)-specific ribonuclease PARN (parn) (Danio rerio (Zebrafish)).